The chain runs to 477 residues: Angiotensinogen (477 aa).

The first 24 residues, 1–24, serve as a signal peptide directing secretion; that stretch reads MTPTGAGLKATIFCILTWVSLTAG. A disulfide bridge links Cys-42 with Cys-161. Asn-295 and Asn-319 each carry an N-linked (GlcNAc...) asparagine glycan.

Belongs to the serpin family. In terms of processing, in response to low blood pressure, the enzyme renin/REN cleaves angiotensinogen to produce angiotensin-1. Angiotensin-1 is a substrate of ACE (angiotensin converting enzyme) that removes a dipeptide to yield the physiologically active peptide angiotensin-2. Angiotensin-1 and angiotensin-2 can be further processed to generate angiotensin-3, angiotensin-4. Angiotensin 1-9 is cleaved from angiotensin-1 by ACE2 and can be further processed by ACE to produce angiotensin 1-7, angiotensin 1-5 and angiotensin 1-4. Angiotensin 1-7 has also been proposed to be cleaved from angiotensin-2 by ACE2 or from angiotensin-1 by MME (neprilysin). The disulfide bond is labile. Angiotensinogen is present in the circulation in a near 40:60 ratio with the oxidized disulfide-bonded form, which preferentially interacts with receptor-bound renin.

It is found in the secreted. Its function is as follows. Essential component of the renin-angiotensin system (RAS), a potent regulator of blood pressure, body fluid and electrolyte homeostasis. Functionally, acts directly on vascular smooth muscle as a potent vasoconstrictor, affects cardiac contractility and heart rate through its action on the sympathetic nervous system, and alters renal sodium and water absorption through its ability to stimulate the zona glomerulosa cells of the adrenal cortex to synthesize and secrete aldosterone. Acts by binding to angiotensin receptors AGTR1 and AGTR2. Also binds the DEAR/FBXW7-AS1 receptor. Stimulates aldosterone release. In terms of biological role, is a ligand for the G-protein coupled receptor MAS1. Has vasodilator and antidiuretic effects. Has an antithrombotic effect that involves MAS1-mediated release of nitric oxide from platelets. This chain is Angiotensinogen (Agt), found in Rattus norvegicus (Rat).